Consider the following 676-residue polypeptide: ATP-dependent zinc metalloprotease FTSH 2, chloroplastic (676 aa).

Residues 1–32 constitute a chloroplast transit peptide; the sequence is MAPTSMSLAAKTPLPFSTLPSSGVAQRPVSVT. The chain crosses the membrane as a helical span at residues 155–175; the sequence is LLFNLIGNLAFPLILIGGLFL. ATP is bound at residue 254–261; that stretch reads GPPGTGKT. Histidine 475 is a Zn(2+) binding site. Residue glutamate 476 is part of the active site. Zn(2+)-binding residues include histidine 479 and aspartate 553.

The protein in the N-terminal section; belongs to the AAA ATPase family. In the C-terminal section; belongs to the peptidase M41 family. The cofactor is Zn(2+).

It is found in the plastid. Its subcellular location is the chloroplast thylakoid membrane. Its function is as follows. Probable ATP-dependent zinc metallopeptidase. The chain is ATP-dependent zinc metalloprotease FTSH 2, chloroplastic (FTSH2) from Oryza sativa subsp. japonica (Rice).